Here is a 336-residue protein sequence, read N- to C-terminus: Glyceraldehyde-3-phosphate dehydrogenase (336 aa).

NAD(+)-binding positions include 12-13 (RI), aspartate 34, arginine 78, and serine 120. Residues 151 to 153 (SCT) and threonine 182 each bind D-glyceraldehyde 3-phosphate. The active-site Nucleophile is the cysteine 152. Asparagine 183 serves as a coordination point for NAD(+). D-glyceraldehyde 3-phosphate-binding positions include 211-212 (NG) and arginine 234. Residue asparagine 316 coordinates NAD(+).

It belongs to the glyceraldehyde-3-phosphate dehydrogenase family. In terms of assembly, homotetramer.

Its subcellular location is the cytoplasm. It carries out the reaction D-glyceraldehyde 3-phosphate + phosphate + NAD(+) = (2R)-3-phospho-glyceroyl phosphate + NADH + H(+). It participates in carbohydrate degradation; glycolysis; pyruvate from D-glyceraldehyde 3-phosphate: step 1/5. Its function is as follows. Catalyzes the oxidative phosphorylation of glyceraldehyde 3-phosphate (G3P) to 1,3-bisphosphoglycerate (BPG) using the cofactor NAD. The first reaction step involves the formation of a hemiacetal intermediate between G3P and a cysteine residue, and this hemiacetal intermediate is then oxidized to a thioester, with concomitant reduction of NAD to NADH. The reduced NADH is then exchanged with the second NAD, and the thioester is attacked by a nucleophilic inorganic phosphate to produce BPG. This is Glyceraldehyde-3-phosphate dehydrogenase (gap) from Heyndrickxia coagulans (Weizmannia coagulans).